The sequence spans 44 residues: Large ribosomal subunit protein bL34 (44 aa).

Belongs to the bacterial ribosomal protein bL34 family.

The protein is Large ribosomal subunit protein bL34 of Wolbachia sp. subsp. Brugia malayi (strain TRS).